The chain runs to 466 residues: Phosphomethylpyrimidine synthase (466 aa).

Substrate-binding positions include asparagine 80, methionine 109, tyrosine 139, histidine 175, 195-197 (SRG), 236-239 (DSLR), and glutamate 275. Histidine 279 contributes to the Zn(2+) binding site. Tyrosine 302 is a binding site for substrate. Histidine 343 provides a ligand contact to Zn(2+). [4Fe-4S] cluster is bound by residues cysteine 423, cysteine 426, and cysteine 431.

Belongs to the ThiC family. The cofactor is [4Fe-4S] cluster.

It carries out the reaction 5-amino-1-(5-phospho-beta-D-ribosyl)imidazole + S-adenosyl-L-methionine = 4-amino-2-methyl-5-(phosphooxymethyl)pyrimidine + CO + 5'-deoxyadenosine + formate + L-methionine + 3 H(+). It participates in cofactor biosynthesis; thiamine diphosphate biosynthesis. In terms of biological role, catalyzes the synthesis of the hydroxymethylpyrimidine phosphate (HMP-P) moiety of thiamine from aminoimidazole ribotide (AIR) in a radical S-adenosyl-L-methionine (SAM)-dependent reaction. This is Phosphomethylpyrimidine synthase from Prochlorococcus marinus (strain NATL2A).